The following is a 102-amino-acid chain: MKGLVRYMLHMDDPNKFKYQKEDMIVYGGVDVDELLKKTTTDRYKLIKEMIEFIDEQGIVEFKSLMDYAMKFKFDDWFPLLCDNSAYVIQEYIKSNRYKSDR.

This sequence belongs to the Gram-positive plasmids replication protein type 2 family.

This is an uncharacterized protein from Staphylococcus aureus.